A 339-amino-acid chain; its full sequence is MIFIDACFRKETPYTPIWMMRQAGRYLSEYQESRKKAGSFLELCKNSDLATEVTLQPVEILGVDAAILFSDILVVPLEMGLNLEFIPKKGPHFLETITDLKSVESLKVGAYKQLNYVYDTISQTRQKLSKEKALIGFCGSPWTLATYMIEGEGSKSYAKSKKMLYSEPEVLKALLEKLSLELIEYLSLQIQAGVNAVMIFDSWASALEKEAYLEFSWDYLKKISKELKKRYAHIPVILFPKGIGAYLDSIDGEFDVFGVDWGTPLEVAKKILGDKYVLHGNLEPTRLYDKNALEEGVEKILKVMGNQGHIFNLGHGMLPDLPRENAKYLVQLVHAKTRR.

Residues 21-25 (RQAGR), Asp71, Tyr147, Ser202, and His315 contribute to the substrate site.

It belongs to the uroporphyrinogen decarboxylase family. In terms of assembly, homodimer.

Its subcellular location is the cytoplasm. It catalyses the reaction uroporphyrinogen III + 4 H(+) = coproporphyrinogen III + 4 CO2. It functions in the pathway porphyrin-containing compound metabolism; protoporphyrin-IX biosynthesis; coproporphyrinogen-III from 5-aminolevulinate: step 4/4. Catalyzes the decarboxylation of four acetate groups of uroporphyrinogen-III to yield coproporphyrinogen-III. In Helicobacter pylori (strain P12), this protein is Uroporphyrinogen decarboxylase.